The primary structure comprises 142 residues: Large ribosomal subunit protein uL13 (142 aa).

This sequence belongs to the universal ribosomal protein uL13 family. As to quaternary structure, part of the 50S ribosomal subunit.

This protein is one of the early assembly proteins of the 50S ribosomal subunit, although it is not seen to bind rRNA by itself. It is important during the early stages of 50S assembly. In Acidovorax sp. (strain JS42), this protein is Large ribosomal subunit protein uL13.